Consider the following 295-residue polypeptide: UDP-3-O-acyl-N-acetylglucosamine deacetylase (295 aa).

3 residues coordinate Zn(2+): His-75, His-232, and Asp-236. The active-site Proton donor is His-259.

Belongs to the LpxC family. It depends on Zn(2+) as a cofactor.

It catalyses the reaction a UDP-3-O-[(3R)-3-hydroxyacyl]-N-acetyl-alpha-D-glucosamine + H2O = a UDP-3-O-[(3R)-3-hydroxyacyl]-alpha-D-glucosamine + acetate. It participates in glycolipid biosynthesis; lipid IV(A) biosynthesis; lipid IV(A) from (3R)-3-hydroxytetradecanoyl-[acyl-carrier-protein] and UDP-N-acetyl-alpha-D-glucosamine: step 2/6. Functionally, catalyzes the hydrolysis of UDP-3-O-myristoyl-N-acetylglucosamine to form UDP-3-O-myristoylglucosamine and acetate, the committed step in lipid A biosynthesis. The polypeptide is UDP-3-O-acyl-N-acetylglucosamine deacetylase (Helicobacter pylori (strain J99 / ATCC 700824) (Campylobacter pylori J99)).